A 434-amino-acid chain; its full sequence is Enolase (434 aa).

Residues H158 and E167 each contribute to the substrate site. E210 acts as the Proton donor in catalysis. D245, E294, and D319 together coordinate Mg(2+). E294 and D319 together coordinate substrate. K344 functions as the Proton acceptor in the catalytic mechanism. Substrate contacts are provided by residues 371-374 (SHRS) and K395.

This sequence belongs to the enolase family. Homodimer. It depends on Mg(2+) as a cofactor.

Its subcellular location is the cytoplasm. It carries out the reaction (2R)-2-phosphoglycerate = phosphoenolpyruvate + H2O. It functions in the pathway carbohydrate degradation; glycolysis; pyruvate from D-glyceraldehyde 3-phosphate: step 4/5. This is Enolase (ENO) from Schistosoma japonicum (Blood fluke).